The following is a 759-amino-acid chain: Arylphorin subunit C223 (759 aa).

The signal sequence occupies residues 1-15; the sequence is MKIAIVLLAIVGLAA.

The protein belongs to the hemocyanin family. As to quaternary structure, heterohexamer. In terms of tissue distribution, fat body.

The protein localises to the secreted. The protein resides in the extracellular space. Functionally, arylphorin is a larval storage protein (LSP) which may serve as a storage protein used primarily as a source of aromatic amino acids for protein synthesis during metamorphosis. It is a constituent of the sclerotizing system of the cuticle, and serves as a carrier for ecdysteroid hormone. The protein is Arylphorin subunit C223 of Calliphora vicina (Blue blowfly).